Reading from the N-terminus, the 477-residue chain is Mitochondrial adenyl nucleotide antiporter SLC25A24 (477 aa).

A regulatory N-terminal domain region spans residues 1 to 174 (MHQLIRKFVF…RYWKKSTVLD (174 aa)). Residues 1-198 (MHQLIRKFVF…EKTTGMWWKQ (198 aa)) are Mitochondrial intermembrane-facing. One can recognise an EF-hand 1 domain in the interval 20–55 (DNTKSFAELFEKLDVNKDGKVDVSELKTGLAAMGFS). Residues Asp-33, Asn-35, Asp-37, Lys-39, Glu-44, Asp-69, Asp-71, Asp-73, Glu-80, Asp-100, Asn-102, Asp-104, Arg-106, Glu-111, Asp-136, Asp-138, Thr-140, Thr-142, and Glu-147 each coordinate Ca(2+). 2 EF-hand domains span residues 87–122 (EHEK…LGIN) and 123–158 (LSDK…NPAE). A linker region region spans residues 160–169 (LQQIIRYWKK). Positions 175 to 477 (IGDSLTIPDE…YMRSGLGISK (303 aa)) are C-terminal transmembrane transporter domain. Solcar repeat units lie at residues 193–279 (GMWW…YKKL), 287–372 (VQSH…LKNT), and 384–472 (PGVL…MRSG). Residues 199-216 (LAAGGVAGAVSRTGTAPL) traverse the membrane as a helical segment. Topologically, residues 217 to 253 (DRMKVFMQVHSSKTNKISLVNGFKQMIKEGGVASLWR) are mitochondrial matrix. A helical membrane pass occupies residues 254 to 273 (GNGVNVIKIAPETAIKFMAY). The Mitochondrial intermembrane segment spans residues 274 to 296 (EQYKKLLSKDGGKVQSHERFMAG). A helical transmembrane segment spans residues 297–310 (SLAGATAQTAIYPM). Residues 311 to 346 (EVMKTRLTLRKTGQYSGMFDCAKKILRKEGVKAFYK) are Mitochondrial matrix-facing. Residues 347 to 366 (GYVPNILGIIPYAGIDLAVY) traverse the membrane as a helical segment. Over 367-389 (ETLKNTWLSHYAKDTANPGVLVL) the chain is Mitochondrial intermembrane. A helical membrane pass occupies residues 390-407 (LGCGTISSTCGQLASYPL). Over 408-446 (ALIRTRMQAMASMEGSEQVSMSKLVKKIMQKEGFFGLYR) the chain is Mitochondrial matrix. The helical transmembrane segment at 447 to 466 (GILPNFMKVIPAVSISYVVY) threads the bilayer. The Mitochondrial intermembrane segment spans residues 467-477 (EYMRSGLGISK).

It belongs to the mitochondrial carrier (TC 2.A.29) family. Monomer.

Its subcellular location is the mitochondrion inner membrane. The catalysed reaction is Mg(2+)(out) + phosphate(in) + ATP(out) = Mg(2+)(in) + phosphate(out) + ATP(in). The enzyme catalyses ADP(out) + phosphate(in) + H(+)(out) = ADP(in) + phosphate(out) + H(+)(in). It catalyses the reaction AMP(out) + phosphate(in) = AMP(in) + phosphate(out). It carries out the reaction phosphate(in) + ATP(out) + 2 H(+)(out) = phosphate(out) + ATP(in) + 2 H(+)(in). The catalysed reaction is dADP(in) + ADP(out) = dADP(out) + ADP(in). The enzyme catalyses Mg(2+)(in) + ADP(out) + ATP(in) + H(+)(out) = Mg(2+)(out) + ADP(in) + ATP(out) + H(+)(in). It catalyses the reaction ADP(out) + diphosphate(in) = ADP(in) + diphosphate(out). It carries out the reaction dAMP(in) + ADP(out) + H(+)(out) = dAMP(out) + ADP(in) + H(+)(in). The catalysed reaction is 3'-AMP(in) + ADP(out) + H(+)(out) = 3'-AMP(out) + ADP(in) + H(+)(in). The enzyme catalyses dAMP(out) + phosphate(in) = dAMP(in) + phosphate(out). It catalyses the reaction 3'-AMP(out) + phosphate(in) = 3'-AMP(in) + phosphate(out). It carries out the reaction dADP(out) + phosphate(in) + H(+)(out) = dADP(in) + phosphate(out) + H(+)(in). Its activity is regulated as follows. Activated by an increase in cytosolic calcium levels that induce a conformational change of the N-terminal regulatory domain, uncapping the channel and allowing transport. Inhibited by bathophenanthroline, mersalyl, p-hydroxymercuribenzoate, bromcresol purple and tannic acid. Its function is as follows. Electroneutral antiporter that mediates the transport of adenyl nucleotides through the inner mitochondrial membrane. Originally identified as an ATP-magnesium/inorganic phosphate antiporter, it also acts as a broad specificity adenyl nucleotide antiporter. By regulating the mitochondrial matrix adenyl nucleotide pool could adapt to changing cellular energetic demands and indirectly regulate adenyl nucleotide-dependent metabolic pathways. This chain is Mitochondrial adenyl nucleotide antiporter SLC25A24 (slc25a24), found in Danio rerio (Zebrafish).